The following is a 411-amino-acid chain: Tyrosine--tRNA ligase (411 aa).

Tyrosine 33 is a binding site for L-tyrosine. The 'HIGH' region motif lies at proline 38 to asparagine 47. L-tyrosine contacts are provided by tyrosine 160 and glutamine 164. The 'KMSKS' region motif lies at lysine 222–serine 226. Residue lysine 225 coordinates ATP. The S4 RNA-binding domain maps to serine 347–valine 411.

This sequence belongs to the class-I aminoacyl-tRNA synthetase family. TyrS type 1 subfamily. In terms of assembly, homodimer.

Its subcellular location is the cytoplasm. The catalysed reaction is tRNA(Tyr) + L-tyrosine + ATP = L-tyrosyl-tRNA(Tyr) + AMP + diphosphate + H(+). Catalyzes the attachment of tyrosine to tRNA(Tyr) in a two-step reaction: tyrosine is first activated by ATP to form Tyr-AMP and then transferred to the acceptor end of tRNA(Tyr). In Mycoplasmopsis agalactiae (strain NCTC 10123 / CIP 59.7 / PG2) (Mycoplasma agalactiae), this protein is Tyrosine--tRNA ligase.